We begin with the raw amino-acid sequence, 510 residues long: MTTSIIERIDAWAEKTPDFPCYEYAGTRLSYKELKRQSDAFGSFLLNTLNSDKEKPIIVYGHMSPLMLIAFLGTIKSGRAYVPVDVSMPVERIEQIKKAADPALFICTEELPSNLTITGCPVLTQDQLMDALEKHFEEVPDPAECVKNDDNYYIIYTSGSTGNPKGVQISQNNLVSFSNWILQDFSLRQGLRFLNQAPFSFDLSVMDLYPSLLSGGTLVPLDKTITANMKDLYREIPAQNFDVWVSTPSFADLCLLDDNFNQENNPNLTRFLFCGEVLAKKTASELLDRFPDAVIYNTYGPTEATVAVTQVKVTRELIDAYPSLPLGVIKPDMRLHIVDQETGEILPEGEKGEIILIGASVSKGYLNEPEKTDQVFFDYKGYQAYHTGDSGVIKDGYLFFQGRLDFQIKLHGYRIELEDIENNLKKVSYIQNCAIIPKMKDEKVDMLVAQVIPSSHDFEKEYQLSAAIKNELKEFMPAYMIPRKWIYKTEFPLTMNGKIDRKALNSEVNK.

T157–S158 is an ATP binding site. D202 is a D-alanine binding site. N297 to T302 contacts ATP. Residue V306 participates in D-alanine binding. Residues D389 and K498 each coordinate ATP. Residue K498 coordinates D-alanine.

Belongs to the ATP-dependent AMP-binding enzyme family. DltA subfamily.

Its subcellular location is the cytoplasm. It catalyses the reaction holo-[D-alanyl-carrier protein] + D-alanine + ATP = D-alanyl-[D-alanyl-carrier protein] + AMP + diphosphate. It functions in the pathway cell wall biogenesis; lipoteichoic acid biosynthesis. Its function is as follows. Catalyzes the first step in the D-alanylation of lipoteichoic acid (LTA), the activation of D-alanine and its transfer onto the D-alanyl carrier protein (Dcp) DltC. In an ATP-dependent two-step reaction, forms a high energy D-alanyl-AMP intermediate, followed by transfer of the D-alanyl residue as a thiol ester to the phosphopantheinyl prosthetic group of the Dcp. D-alanylation of LTA plays an important role in modulating the properties of the cell wall in Gram-positive bacteria, influencing the net charge of the cell wall. The protein is D-alanine--D-alanyl carrier protein ligase of Listeria innocua serovar 6a (strain ATCC BAA-680 / CLIP 11262).